We begin with the raw amino-acid sequence, 419 residues long: Gamma-glutamyl phosphate reductase (419 aa).

The protein belongs to the gamma-glutamyl phosphate reductase family.

Its subcellular location is the cytoplasm. It catalyses the reaction L-glutamate 5-semialdehyde + phosphate + NADP(+) = L-glutamyl 5-phosphate + NADPH + H(+). It participates in amino-acid biosynthesis; L-proline biosynthesis; L-glutamate 5-semialdehyde from L-glutamate: step 2/2. Catalyzes the NADPH-dependent reduction of L-glutamate 5-phosphate into L-glutamate 5-semialdehyde and phosphate. The product spontaneously undergoes cyclization to form 1-pyrroline-5-carboxylate. The protein is Gamma-glutamyl phosphate reductase of Yersinia pestis.